Reading from the N-terminus, the 448-residue chain is Trigger factor (448 aa).

Residues 167–253 (GSIVRVDFVE…VKDIKRRDIP (87 aa)) form the PPIase FKBP-type domain.

It belongs to the FKBP-type PPIase family. Tig subfamily.

It localises to the cytoplasm. It carries out the reaction [protein]-peptidylproline (omega=180) = [protein]-peptidylproline (omega=0). Functionally, involved in protein export. Acts as a chaperone by maintaining the newly synthesized protein in an open conformation. Functions as a peptidyl-prolyl cis-trans isomerase. In Borrelia recurrentis (strain A1), this protein is Trigger factor.